The following is a 251-amino-acid chain: Mlc titration factor A (251 aa).

His-111, His-148, His-152, and Glu-211 together coordinate Zn(2+).

The protein belongs to the MtfA family. As to quaternary structure, interacts with Mlc. Zn(2+) is required as a cofactor.

The protein resides in the cytoplasm. Involved in the modulation of the activity of the glucose-phosphotransferase system (glucose-PTS). Interacts with the transcriptional repressor Mlc, preventing its interaction with DNA and leading to the modulation of expression of genes regulated by Mlc, including ptsG, which encodes the PTS system glucose-specific EIICB component. In terms of biological role, shows zinc-dependent metallopeptidase activity. The protein is Mlc titration factor A of Salmonella arizonae (strain ATCC BAA-731 / CDC346-86 / RSK2980).